Here is a 292-residue protein sequence, read N- to C-terminus: Acetylglutamate kinase (292 aa).

Substrate-binding positions include Gly-64–Gly-65, Arg-86, and Asn-190.

This sequence belongs to the acetylglutamate kinase family. ArgB subfamily.

Its subcellular location is the cytoplasm. It carries out the reaction N-acetyl-L-glutamate + ATP = N-acetyl-L-glutamyl 5-phosphate + ADP. It participates in amino-acid biosynthesis; L-arginine biosynthesis; N(2)-acetyl-L-ornithine from L-glutamate: step 2/4. Functionally, catalyzes the ATP-dependent phosphorylation of N-acetyl-L-glutamate. The chain is Acetylglutamate kinase from Geobacter metallireducens (strain ATCC 53774 / DSM 7210 / GS-15).